The following is a 465-amino-acid chain: FeMo cofactor biosynthesis protein FixZ (465 aa).

The tract at residues 1–36 is disordered; that stretch reads MSEPEIKVGKTSSALFDRAPMAPSMPGGRASSSHGL. The region spanning 61-312 is the Radical SAM core domain; the sequence is HHYFARMHXX…MRHCQQCRAD (252 aa). [4Fe-4S] cluster-binding residues include Cys75 and Cys79. Residue Tyr81 participates in S-adenosyl-L-methionine binding. [4Fe-4S] cluster is bound at residue Cys82. S-adenosyl-L-methionine contacts are provided by Gly129, Thr181, and Ile233. The [4Fe-4S] cluster site is built by Cys306 and Cys309.

Belongs to the radical SAM superfamily. NifB family. [4Fe-4S] cluster serves as cofactor.

It functions in the pathway cofactor biosynthesis; Fe-Mo cofactor biosynthesis. Involved in the biosynthesis of the iron-molybdenum cofactor (FeMo-co or M-cluster) found in the dinitrogenase enzyme of the nitrogenase complex in nitrogen-fixing microorganisms. Catalyzes the crucial step of radical SAM-dependent carbide insertion that occurs concomitant with the insertion of a 9th sulfur and the rearrangement/coupling of two [4Fe-4S] clusters into a [8Fe-9S-C] cluster, the precursor to the M-cluster. The polypeptide is FeMo cofactor biosynthesis protein FixZ (fixZ) (Rhizobium leguminosarum).